The sequence spans 327 residues: Endo-1,4-beta-xylanase C (327 aa).

An N-terminal signal peptide occupies residues 1-15 (MKFSSLLFTASLVAA). Residues 43–325 (TITDPNLLQS…KPAYTAVVNA (283 aa)) form the GH10 domain. The Proton donor role is filled by glutamate 154. The active-site Nucleophile is glutamate 262. A disulfide bridge links cysteine 280 with cysteine 286.

It belongs to the glycosyl hydrolase 10 (cellulase F) family.

The protein resides in the secreted. The enzyme catalyses Endohydrolysis of (1-&gt;4)-beta-D-xylosidic linkages in xylans.. It participates in glycan degradation; xylan degradation. Weakly inhibited by the wheat xylanase inhibiting protein I (XIP-I). Its function is as follows. Endo-1,4-beta-xylanase involved in the hydrolysis of xylan, a major structural heterogeneous polysaccharide found in plant biomass representing the second most abundant polysaccharide in the biosphere, after cellulose. Plays an important role in causing fusarium head blight (FHB) on cereal crops. The polypeptide is Endo-1,4-beta-xylanase C (XYLC) (Gibberella zeae (strain ATCC MYA-4620 / CBS 123657 / FGSC 9075 / NRRL 31084 / PH-1) (Wheat head blight fungus)).